Consider the following 168-residue polypeptide: uncharacterized protein (168 aa).

2 disordered regions span residues 1-81 and 119-150; these read MSSA…GRSW and RDLS…STVA. The span at 7–34 shows a compositional bias: low complexity; the sequence is SRTSRSKATGASSSSISSSIRASPSSSS. Over residues 43–67 the composition is skewed to basic residues; sequence TRRRRRRTGRRSTKRSIISPRRRRM. A compositionally biased stretch (polar residues) spans 123 to 146; the sequence is ESASTGSENLSRKASNQSQSQGRL.

This is an uncharacterized protein from Human adenovirus C serotype 2 (HAdV-2).